Reading from the N-terminus, the 309-residue chain is Protein FdhE homolog (309 aa).

The protein belongs to the FdhE family.

It is found in the cytoplasm. Its function is as follows. Necessary for formate dehydrogenase activity. The chain is Protein FdhE homolog from Klebsiella pneumoniae (strain 342).